We begin with the raw amino-acid sequence, 130 residues long: Small ribosomal subunit protein uS11 (130 aa).

The segment at 108–130 (IEDVTPIPHDGTGRPGGKRGRRV) is disordered.

This sequence belongs to the universal ribosomal protein uS11 family. Part of the 30S ribosomal subunit.

Functionally, located on the platform of the 30S subunit. In Methanothermobacter thermautotrophicus (strain ATCC 29096 / DSM 1053 / JCM 10044 / NBRC 100330 / Delta H) (Methanobacterium thermoautotrophicum), this protein is Small ribosomal subunit protein uS11.